We begin with the raw amino-acid sequence, 413 residues long: MSGSVSPLAPKTFAEMPALRGVRMATAAAGIKYKNRTDVLMMLFDRPASVAGVFTRSKCPSAPVDHCRQNLPGGIARAVVVNSGNANAFTGKKGREATRLTAEAAAKAVGCSEAEVFLASTGVIGEPLDATKFAGVLDKLAASATQDFWFEAAKAIMTTDTYPKVATRSAEIGGVKVAINGIAKGAGMIAPDMATMLSFVVTDADIAPAALQALLQAGVEPTFNSVTVDSDTSTSDTLMLFATGAAAGDGQAKVEDAADPRLDGFRAALDDLLRDLALQVVRDGEGARKMVEVTVEGAENDAAAKRIALSIANSPLVKTAVAGEDANWGRVVMAVGKSGEMAERDRLAIWFGDIRVAVEGERDPAYSEAAATAVMQGETIPIRVDIGLGSGRATVYTCDLTKEYVEINGDYRS.

Substrate-binding residues include Thr158, Lys184, Thr195, Glu285, Asn408, and Ser413. Thr195 serves as the catalytic Nucleophile.

This sequence belongs to the ArgJ family. In terms of assembly, heterotetramer of two alpha and two beta chains.

The protein localises to the cytoplasm. The catalysed reaction is N(2)-acetyl-L-ornithine + L-glutamate = N-acetyl-L-glutamate + L-ornithine. It catalyses the reaction L-glutamate + acetyl-CoA = N-acetyl-L-glutamate + CoA + H(+). The protein operates within amino-acid biosynthesis; L-arginine biosynthesis; L-ornithine and N-acetyl-L-glutamate from L-glutamate and N(2)-acetyl-L-ornithine (cyclic): step 1/1. Its pathway is amino-acid biosynthesis; L-arginine biosynthesis; N(2)-acetyl-L-ornithine from L-glutamate: step 1/4. Its function is as follows. Catalyzes two activities which are involved in the cyclic version of arginine biosynthesis: the synthesis of N-acetylglutamate from glutamate and acetyl-CoA as the acetyl donor, and of ornithine by transacetylation between N(2)-acetylornithine and glutamate. The sequence is that of Arginine biosynthesis bifunctional protein ArgJ from Rhizobium meliloti (strain 1021) (Ensifer meliloti).